Reading from the N-terminus, the 171-residue chain is NADH-quinone oxidoreductase subunit I (171 aa).

4Fe-4S ferredoxin-type domains are found at residues 41–71 (LTRD…LQKT) and 81–110 (EFFR…LTPD). [4Fe-4S] cluster contacts are provided by Cys-51, Cys-54, Cys-57, Cys-61, Cys-90, Cys-93, Cys-96, and Cys-100.

Belongs to the complex I 23 kDa subunit family. NDH-1 is composed of 14 different subunits. Subunits NuoA, H, J, K, L, M, N constitute the membrane sector of the complex. [4Fe-4S] cluster serves as cofactor.

It is found in the cell inner membrane. It carries out the reaction a quinone + NADH + 5 H(+)(in) = a quinol + NAD(+) + 4 H(+)(out). Its function is as follows. NDH-1 shuttles electrons from NADH, via FMN and iron-sulfur (Fe-S) centers, to quinones in the respiratory chain. The immediate electron acceptor for the enzyme in this species is believed to be ubiquinone. Couples the redox reaction to proton translocation (for every two electrons transferred, four hydrogen ions are translocated across the cytoplasmic membrane), and thus conserves the redox energy in a proton gradient. The sequence is that of NADH-quinone oxidoreductase subunit I from Methylococcus capsulatus (strain ATCC 33009 / NCIMB 11132 / Bath).